A 135-amino-acid chain; its full sequence is Bacilliredoxin CHU_0972 (135 aa).

Belongs to the bacilliredoxin family.

This is Bacilliredoxin CHU_0972 from Cytophaga hutchinsonii (strain ATCC 33406 / DSM 1761 / CIP 103989 / NBRC 15051 / NCIMB 9469 / D465).